The following is a 408-amino-acid chain: Serine/threonine transporter SstT (408 aa).

Transmembrane regions (helical) follow at residues 11 to 31 (LANG…VALA), 43 to 63 (FLGS…VFIL), 82 to 102 (IVVL…ILSM), 141 to 161 (ALMT…GLAL), 192 to 212 (IGIF…AIAG), 216 to 236 (LLAV…PLIV), 290 to 310 (IPLG…VLTL), 316 to 336 (LGIQ…AISA), and 363 to 383 (VAMQ…AAET).

It belongs to the dicarboxylate/amino acid:cation symporter (DAACS) (TC 2.A.23) family.

It localises to the cell inner membrane. The enzyme catalyses L-serine(in) + Na(+)(in) = L-serine(out) + Na(+)(out). The catalysed reaction is L-threonine(in) + Na(+)(in) = L-threonine(out) + Na(+)(out). Involved in the import of serine and threonine into the cell, with the concomitant import of sodium (symport system). The sequence is that of Serine/threonine transporter SstT from Shewanella oneidensis (strain ATCC 700550 / JCM 31522 / CIP 106686 / LMG 19005 / NCIMB 14063 / MR-1).